A 932-amino-acid chain; its full sequence is Protein translocase subunit SecA (932 aa).

Residues Gln90, 108 to 112 (GEGKT), and Asp498 each bind ATP.

The protein belongs to the SecA family. As to quaternary structure, monomer and homodimer. Part of the essential Sec protein translocation apparatus which comprises SecA, SecYEG and auxiliary proteins SecDF. Other proteins may also be involved.

The protein resides in the cell inner membrane. The protein localises to the cellular thylakoid membrane. It localises to the cytoplasm. It carries out the reaction ATP + H2O + cellular proteinSide 1 = ADP + phosphate + cellular proteinSide 2.. Its function is as follows. Part of the Sec protein translocase complex. Interacts with the SecYEG preprotein conducting channel. Has a central role in coupling the hydrolysis of ATP to the transfer of proteins into and across the cell membrane, serving as an ATP-driven molecular motor driving the stepwise translocation of polypeptide chains across the membrane. Functionally, probably participates in protein translocation into and across both the cytoplasmic and thylakoid membranes in cyanobacterial cells. The polypeptide is Protein translocase subunit SecA (Synechocystis sp. (strain ATCC 27184 / PCC 6803 / Kazusa)).